The primary structure comprises 328 residues: Formyltetrahydrofolate deformylase 2, mitochondrial (328 aa).

A mitochondrion-targeting transit peptide spans 1-12; the sequence is MIRRVSTTSCLS. The ACT domain maps to 46-129; it reads FHVFHCPDVV…SVVRVPSLDP (84 aa). D272 is an active-site residue.

This sequence belongs to the PurU family. In terms of tissue distribution, expressed in leaves, cotyledons, roots, seeds and flowers.

The protein resides in the mitochondrion. It carries out the reaction (6R)-10-formyltetrahydrofolate + H2O = (6S)-5,6,7,8-tetrahydrofolate + formate + H(+). In terms of biological role, deformylase involved in photorespiration. Prevents excessive accumulation of 5-formyl tetrahydrofolate (THF), a potent inhibitor of the Gly decarboxylase/Ser hydroxymethyltransferase complex. The chain is Formyltetrahydrofolate deformylase 2, mitochondrial (PURU2) from Arabidopsis thaliana (Mouse-ear cress).